Here is a 460-residue protein sequence, read N- to C-terminus: uncharacterized protein (460 aa).

This sequence to yeast YGL164c.

This is an uncharacterized protein from Schizosaccharomyces pombe (strain 972 / ATCC 24843) (Fission yeast).